A 303-amino-acid polypeptide reads, in one-letter code: Type II methyltransferase M.MjaI (303 aa).

Belongs to the N(4)/N(6)-methyltransferase family. N(4) subfamily.

The catalysed reaction is a 2'-deoxycytidine in DNA + S-adenosyl-L-methionine = an N(4)-methyl-2'-deoxycytidine in DNA + S-adenosyl-L-homocysteine + H(+). Its function is as follows. A beta subtype methylase that recognizes the double-stranded sequence 5'-CTAG-3', methylates C-1 on both strands, and protects the DNA from cleavage by the MjaI endonuclease. The protein is Type II methyltransferase M.MjaI (mjaIM) of Methanocaldococcus jannaschii (strain ATCC 43067 / DSM 2661 / JAL-1 / JCM 10045 / NBRC 100440) (Methanococcus jannaschii).